Consider the following 658-residue polypeptide: Glycogen debranching enzyme (658 aa).

The active-site Nucleophile is the D336. The Proton donor role is filled by E371. Residues 459–484 are disordered; sequence EANGEENRDGTNSNYSDNHGKEGLGG.

The protein belongs to the glycosyl hydrolase 13 family.

The enzyme catalyses Hydrolysis of (1-&gt;6)-alpha-D-glucosidic linkages to branches with degrees of polymerization of three or four glucose residues in limit dextrin.. It participates in glycan degradation; glycogen degradation. Removes maltotriose and maltotetraose chains that are attached by 1,6-alpha-linkage to the limit dextrin main chain, generating a debranched limit dextrin. In Salmonella enteritidis PT4 (strain P125109), this protein is Glycogen debranching enzyme.